A 433-amino-acid chain; its full sequence is Serine--tRNA ligase (433 aa).

235-237 (TSE) provides a ligand contact to L-serine. 266-268 (RSE) contacts ATP. Glu-289 contacts L-serine. An ATP-binding site is contributed by 353-356 (EISS). Ser-388 provides a ligand contact to L-serine.

Belongs to the class-II aminoacyl-tRNA synthetase family. Type-1 seryl-tRNA synthetase subfamily. Homodimer. The tRNA molecule binds across the dimer.

It localises to the cytoplasm. The enzyme catalyses tRNA(Ser) + L-serine + ATP = L-seryl-tRNA(Ser) + AMP + diphosphate + H(+). The catalysed reaction is tRNA(Sec) + L-serine + ATP = L-seryl-tRNA(Sec) + AMP + diphosphate + H(+). It functions in the pathway aminoacyl-tRNA biosynthesis; selenocysteinyl-tRNA(Sec) biosynthesis; L-seryl-tRNA(Sec) from L-serine and tRNA(Sec): step 1/1. In terms of biological role, catalyzes the attachment of serine to tRNA(Ser). Is also able to aminoacylate tRNA(Sec) with serine, to form the misacylated tRNA L-seryl-tRNA(Sec), which will be further converted into selenocysteinyl-tRNA(Sec). The chain is Serine--tRNA ligase from Burkholderia cenocepacia (strain HI2424).